We begin with the raw amino-acid sequence, 249 residues long: ATP synthase subunit a, chloroplastic (249 aa).

5 consecutive transmembrane segments (helical) span residues 40-60 (QVLITSWVVIAILLGSSVLAI), 97-117 (VPFIGTLFLFIFVSNWSGALL), 136-156 (INTTVALALLTSVAYFYAGLS), 201-221 (LVVVVLVSLVPLVVPIPVMFL), and 222-242 (GLFTSGIQALIFATLAAAYIG).

Belongs to the ATPase A chain family. F-type ATPases have 2 components, CF(1) - the catalytic core - and CF(0) - the membrane proton channel. CF(1) has five subunits: alpha(3), beta(3), gamma(1), delta(1), epsilon(1). CF(0) has four main subunits: a, b, b' and c.

The protein resides in the plastid. The protein localises to the chloroplast thylakoid membrane. Functionally, key component of the proton channel; it plays a direct role in the translocation of protons across the membrane. This chain is ATP synthase subunit a, chloroplastic, found in Olimarabidopsis pumila (Dwarf rocket).